The following is a 149-amino-acid chain: MEYVPKILVDADACPVKAEIKQVAEQFQLEVIFVASFNHYSVNTNGENWIFVDTGKESADMRMMNIANKGDIIVTQDIGLASILLAKGTYVFSNRGELYREEEMSLMLDIRYRHAKERQQGKYSKGPKAMSDQDRSLFKDRITTFLQNK.

Belongs to the UPF0178 family.

The polypeptide is UPF0178 protein lwe1471 (Listeria welshimeri serovar 6b (strain ATCC 35897 / DSM 20650 / CCUG 15529 / CIP 8149 / NCTC 11857 / SLCC 5334 / V8)).